Reading from the N-terminus, the 376-residue chain is Alcohol dehydrogenase 1 (376 aa).

At serine 2 the chain carries N-acetylserine. 7 residues coordinate Zn(2+): cysteine 47, histidine 68, cysteine 98, cysteine 101, cysteine 104, cysteine 112, and cysteine 176. Residues 201–206, aspartate 225, and lysine 230 each bind NAD(+); that span reads GLGGVG. Position 235 is an N6-succinyllysine (lysine 235). NAD(+) is bound at residue 294–296; it reads VGV. Lysine 341 carries the post-translational modification N6-succinyllysine. Arginine 371 contacts NAD(+).

Belongs to the zinc-containing alcohol dehydrogenase family. Class-I subfamily. Dimer of identical or non-identical chains of three types (A, B, C), which are coded by 3 separate genes at different loci. Requires Zn(2+) as cofactor.

It is found in the cytoplasm. It catalyses the reaction a primary alcohol + NAD(+) = an aldehyde + NADH + H(+). The catalysed reaction is a secondary alcohol + NAD(+) = a ketone + NADH + H(+). This Rattus norvegicus (Rat) protein is Alcohol dehydrogenase 1 (Adh1).